The primary structure comprises 367 residues: Mannan endo-1,4-beta-mannosidase (367 aa).

An N-terminal signal peptide occupies residues 1 to 17 (MLLTALAVLFASTGCQA). Residues tryptophan 79 and asparagine 176 each coordinate substrate. Glutamate 177 acts as the Proton donor in catalysis. Cysteine 192 and cysteine 259 form a disulfide bridge. Tryptophan 205, tryptophan 240, and tyrosine 279 together coordinate substrate. The active-site Nucleophile is the glutamate 308. Tryptophan 337 contacts substrate.

In terms of assembly, monomer. The disulfide bond between Cys-192 and Cys-259 has not been observed in X-ray crystallography. This may be a consequence of the X-ray radiation.

The catalysed reaction is Random hydrolysis of (1-&gt;4)-beta-D-mannosidic linkages in mannans, galactomannans and glucomannans.. Its function is as follows. Hydrolyzes 1,4-beta linked polysaccharide backbones of mannans. Hydrolyzes mannohexaose (M6) preferentially to mannotriose (M4) and less preferentially to mannotetraose (M3), mannopentaose (M5), and mannobiose (M2); hydrolyzes M5 preferentially to M2, and M3, and less preferentially to mannotetraose M4; hydrolyzes M4 preferentially to M3, and less preferentially to mannose (M1), plus very little M2. Does not hydrolyze mannobiose or mannotriose. Does not hydrolyze xlyan, starch, cellulose or galactose. This is Mannan endo-1,4-beta-mannosidase from Mytilus edulis (Blue mussel).